We begin with the raw amino-acid sequence, 339 residues long: 3-isopropylmalate dehydrogenase (339 aa).

Residues Arg87, Arg97, Arg124, and Asp214 each coordinate substrate. Asp214, Asp238, and Asp242 together coordinate Mg(2+). 274–286 contacts NAD(+); the sequence is GSAPDIAGQGIAD.

This sequence belongs to the isocitrate and isopropylmalate dehydrogenases family. LeuB type 2 subfamily. In terms of assembly, homodimer. Mg(2+) is required as a cofactor. Requires Mn(2+) as cofactor.

The protein localises to the cytoplasm. It carries out the reaction (2R,3S)-3-isopropylmalate + NAD(+) = 4-methyl-2-oxopentanoate + CO2 + NADH. It participates in amino-acid biosynthesis; L-leucine biosynthesis; L-leucine from 3-methyl-2-oxobutanoate: step 3/4. Catalyzes the oxidation of 3-carboxy-2-hydroxy-4-methylpentanoate (3-isopropylmalate) to 3-carboxy-4-methyl-2-oxopentanoate. The product decarboxylates to 4-methyl-2 oxopentanoate. This chain is 3-isopropylmalate dehydrogenase, found in Mycobacterium ulcerans (strain Agy99).